The chain runs to 223 residues: Voltage-dependent calcium channel gamma-1 subunit (223 aa).

Residues Met-1 to Arg-10 are Cytoplasmic-facing. A helical membrane pass occupies residues Val-11–Thr-29. At Asp-30–Ala-109 the chain is on the extracellular side. N-linked (GlcNAc...) asparagine glycosylation is found at Asn-43 and Asn-80. Cys-57 and Cys-81 are joined by a disulfide. Residues Ala-110–Phe-130 form a helical membrane-spanning segment. Topologically, residues Gly-131–Asp-135 are cytoplasmic. A helical transmembrane segment spans residues Tyr-136–Val-156. The Extracellular segment spans residues Glu-157–Ser-180. A helical transmembrane segment spans residues Trp-181–Leu-205. Residues Pro-206–His-223 lie on the Cytoplasmic side of the membrane.

This sequence belongs to the PMP-22/EMP/MP20 family. CACNG subfamily. Component of a calcium channel complex consisting of a pore-forming alpha subunit (CACNA1S) and the ancillary subunits CACNB1 or CACNB2, CACNG1 and CACNA2D1. The channel complex contains alpha, beta, gamma and delta subunits in a 1:1:1:1 ratio, i.e. it contains either CACNB1 or CACNB2. In terms of processing, N-glycosylated. In terms of tissue distribution, detected in skeletal muscle (at protein level).

It is found in the cell membrane. The protein resides in the sarcolemma. Its function is as follows. Regulatory subunit of the voltage-gated calcium channel that gives rise to L-type calcium currents in skeletal muscle. Regulates channel inactivation kinetics. The chain is Voltage-dependent calcium channel gamma-1 subunit (Cacng1) from Mus musculus (Mouse).